The primary structure comprises 239 residues: Ribonuclease 3 (239 aa).

The RNase III domain occupies 11–133 (HAAIQKKLGY…MFAAVSFDAD (123 aa)). Glu-46 provides a ligand contact to Mg(2+). The active site involves Asp-50. The Mg(2+) site is built by Asp-119 and Glu-122. The active site involves Glu-122. The DRBM domain occupies 160–230 (DGKTALQEAL…AKEALKWLEE (71 aa)).

Belongs to the ribonuclease III family. In terms of assembly, homodimer. Requires Mg(2+) as cofactor.

It is found in the cytoplasm. It catalyses the reaction Endonucleolytic cleavage to 5'-phosphomonoester.. In terms of biological role, digests double-stranded RNA. Involved in the processing of primary rRNA transcript to yield the immediate precursors to the large and small rRNAs (23S and 16S). Also processes some mRNAs, and tRNAs when they are encoded in the rRNA operon. Functionally, CRISPR (clustered regularly interspaced short palindromic repeat) is an adaptive immune system that provides protection against mobile genetic elements (viruses, transposable elements and conjugative plasmids). CRISPR clusters contain spacers, sequences complementary to antecedent mobile elements, and target invading nucleic acids. CRISPR clusters are transcribed and processed into CRISPR RNA (crRNA). In this organism endogenous ribonuclease 3 and Cas9 are required for correct coprocessing of pre-crRNA and the trans-encoded small RNA (tracrRNA). Cas9, crRNA and tracrRNA are required for cleavage of invading DNA. Complements pre-crRNA and tracrRNA coprocessing defects in an rnc deletion in S.pyogenes strain 370. The sequence is that of Ribonuclease 3 from Neisseria meningitidis serogroup A / serotype 4A (strain DSM 15465 / Z2491).